The chain runs to 234 residues: GTP-binding protein ypt4 (234 aa).

Position 16-23 (16-23 (GPSGTGKS)) interacts with GTP. The Effector region motif lies at 39-47 (SHTVGIDFA). Residue 68-72 (DTAGQ) coordinates GTP. S-geranylgeranyl cysteine attachment occurs at residues cysteine 233 and cysteine 234.

This sequence belongs to the small GTPase superfamily. Rab family.

The protein localises to the cell membrane. The chain is GTP-binding protein ypt4 (ypt4) from Schizosaccharomyces pombe (strain 972 / ATCC 24843) (Fission yeast).